The chain runs to 266 residues: uncharacterized protein (266 aa).

In terms of domain architecture, TIR spans 112–261 (LEKKIFISHS…KKWERIKAKF (150 aa)). E192 is an active-site residue.

It carries out the reaction NAD(+) + H2O = ADP-D-ribose + nicotinamide + H(+). This is an uncharacterized protein from Bacillus subtilis (strain 168).